Reading from the N-terminus, the 526-residue chain is MNDYNVTGTTLGDAFAKLPPNWGQLTGALLFLAACTWIYLPAFDGVPAPFAGYRSPLEPAIVAKTRYAFAASDIISEGYAKWKSSMYKISRHGGDVVVLSRKYIDELQNAPHERLSSIKGLIKNFGGQYSGIDLLDESDIGTRALQTKITPNLTKFSDDMRDELEYALGRDMPDCEDWTLVPLQPILLKLLGRITSRVLIGLPICRDEKWLDAASQHAHNVTITQIVMKAVHPIFRPFLNLVLPTVWRYKSAVRRGKAILAPEVQRRRNLEDNDPDYVKPNDLLQAMMDLSTPGGKDSQPEDLAHRHLLITLVAGHSTAAAGSHALMDLVSRPQLLEELRDEVLQVLQENGGNWGKQSLSKLWKMDSFFRESQRQNPPSLLGFHRIVQDPAGITLHDGVHVPYGTHLCIAPHSVSSDPAVIPNPDVFDGLRYYEQRRQKPDESMKHQHATADKNHLHFGYGTWSCPGRFLASDELKMTLSALLLRYDFKYPDGSSRPTNKHIDEFPYVDPETPLLMRRRHQGGTGV.

The chain crosses the membrane as a helical span at residues 21–43 (NWGQLTGALLFLAACTWIYLPAF). Cys465 contacts heme.

The protein belongs to the cytochrome P450 family. The cofactor is heme.

It is found in the membrane. The protein operates within secondary metabolite biosynthesis. Cytochrome P450 monooxygeanse; part of the gene cluster that mediates the biosynthesis of terpendoles, indole-diterpene (IDT) mycotoxins including terpendole I, terpendole K, terpendole C, as well as the kinesin Eg5 inhibitor terpendole E. Terpendoles biosynthesis begins with the synthesis of geranylgeranyl diphosphate (GGPP) by a yet unidentified GGPP synthase. Condensation of indole-3-glycerol phosphate with GGPP by the prenyltransferase terC then forms 3-geranylgeranylindole (3-GGI), followed by epoxidation and cyclization of this intermediate (by the FAD-dependent monooxygeanse terM and the terpene cyclase terB) to form paspaline. The cytochrome monooxygenase terQ then hydroxylates paspalline at C-11 to yield terpendole E. The cytochrome monooxygenase terP converts terpendole E to 13-desoxyterpendole I, and terQ converts 13-desoxyterpendole I into terpendole I. TerF and terK are required for conversion of terpendole I to terpendole C which is further converted to terpendole K. The chain is Cytochrome P450 monooxygeanse terK from Tolypocladium album (Soil fungus).